The chain runs to 571 residues: Septation ring formation regulator EzrA (571 aa).

Residues 1–3 (MYY) lie on the Extracellular side of the membrane. The chain crosses the membrane as a helical span at residues 4-22 (MLIGFIIVVIAIISAGYIL). At 23–571 (KRKHYQRINE…ESKVSVDDIE (549 aa)) the chain is on the cytoplasmic side. Coiled coils occupy residues 169-214 (VETK…AQME), 249-298 (AQME…DTLE), 326-374 (DALA…ASGE), 400-438 (KFAEELRSLRKDELEARDDAERMRRAIVTLDRKMERERL), and 474-529 (TQDW…ENHF).

It belongs to the EzrA family.

It localises to the cell membrane. Negative regulator of FtsZ ring formation; modulates the frequency and position of FtsZ ring formation. Inhibits FtsZ ring formation at polar sites. Interacts either with FtsZ or with one of its binding partners to promote depolymerization. This Listeria welshimeri serovar 6b (strain ATCC 35897 / DSM 20650 / CCUG 15529 / CIP 8149 / NCTC 11857 / SLCC 5334 / V8) protein is Septation ring formation regulator EzrA.